The chain runs to 166 residues: UBA-like domain-containing protein 2 (166 aa).

The disordered stretch occupies residues 120-166 (QQPVWLPPASPTTHLHHHHHHPQPVWPPNSQPTGGPQKAMAAMDGQR).

This sequence belongs to the UBALD family.

The protein is UBA-like domain-containing protein 2 (ubald2) of Xenopus tropicalis (Western clawed frog).